A 54-amino-acid chain; its full sequence is UPF0391 membrane protein Reut_A0124 (54 aa).

2 helical membrane passes run 5 to 25 and 30 to 50; these read ALVF…GIAA and IAKI…VMGL.

This sequence belongs to the UPF0391 family.

Its subcellular location is the cell membrane. This chain is UPF0391 membrane protein Reut_A0124, found in Cupriavidus pinatubonensis (strain JMP 134 / LMG 1197) (Cupriavidus necator (strain JMP 134)).